We begin with the raw amino-acid sequence, 200 residues long: HTH-type transcriptional repressor KstR2 (200 aa).

Residues 9–69 form the HTH tetR-type domain; that stretch reads NSRRGELLEL…ELLRGFLDWL (61 aa). The H-T-H motif DNA-binding region spans 32–51; sequence TVRDIADGAGILSGSLYHHF.

Homodimer.

Its function is as follows. Controls the expression of a small regulon that may play a role in the utilization of cholesterol. In Mycobacterium tuberculosis (strain CDC 1551 / Oshkosh), this protein is HTH-type transcriptional repressor KstR2 (kstR2).